Here is a 607-residue protein sequence, read N- to C-terminus: (R)-limonene synthase 1, chloroplastic (607 aa).

A chloroplast-targeting transit peptide spans 1 to 52; the sequence is MSSCINPSTLATSVNGFKCLPLATNRAAIRIMAKNKPVQCLVSTKYDNLTVD. Residues Asp-343 and Asp-347 each coordinate Mn(2+). Residues Asp-343, Asp-347, Arg-485, Asp-488, and Lys-504 each coordinate substrate. The short motif at 343-347 is the DDXXD motif element; the sequence is DDIYD. Mn(2+) is bound at residue Asp-488.

This sequence belongs to the terpene synthase family. Mg(2+) serves as cofactor. Mn(2+) is required as a cofactor.

The protein localises to the plastid. It is found in the chloroplast. The catalysed reaction is (2E)-geranyl diphosphate = (4R)-limonene + diphosphate. Its activity is regulated as follows. Inhibited by 2-fluorogeranyl diphosphate (FGPP) and 2-fluoroneryl diphosphate (FNPP). Its function is as follows. Catalyzes the conversion of geranyl diphosphate to (+)-(4R)-limonene. Produces exclusively the (+)-enantiomer. Can use neryl diphosphate as substrate. Has no activity with farnesyl diphosphate. The chain is (R)-limonene synthase 1, chloroplastic from Citrus sinensis (Sweet orange).